Consider the following 336-residue polypeptide: Holliday junction branch migration complex subunit RuvB (336 aa).

Residues 4–184 form a large ATPase domain (RuvB-L) region; that stretch reads ADRLISADAI…FGIVQRLEFY (181 aa). Residues arginine 24, glycine 65, lysine 68, threonine 69, threonine 70, 131–133, arginine 174, tyrosine 184, and arginine 221 each bind ATP; that span reads EDY. Threonine 69 serves as a coordination point for Mg(2+). The tract at residues 185-255 is small ATPAse domain (RuvB-S); sequence NVADLQYIVG…VATQALDMLA (71 aa). Positions 258-336 are head domain (RuvB-H); sequence TEGFDYMDRK…HFGLTREDLG (79 aa). DNA is bound by residues arginine 294, arginine 313, and arginine 318.

The protein belongs to the RuvB family. As to quaternary structure, homohexamer. Forms an RuvA(8)-RuvB(12)-Holliday junction (HJ) complex. HJ DNA is sandwiched between 2 RuvA tetramers; dsDNA enters through RuvA and exits via RuvB. An RuvB hexamer assembles on each DNA strand where it exits the tetramer. Each RuvB hexamer is contacted by two RuvA subunits (via domain III) on 2 adjacent RuvB subunits; this complex drives branch migration. In the full resolvosome a probable DNA-RuvA(4)-RuvB(12)-RuvC(2) complex forms which resolves the HJ.

It localises to the cytoplasm. The enzyme catalyses ATP + H2O = ADP + phosphate + H(+). Its function is as follows. The RuvA-RuvB-RuvC complex processes Holliday junction (HJ) DNA during genetic recombination and DNA repair, while the RuvA-RuvB complex plays an important role in the rescue of blocked DNA replication forks via replication fork reversal (RFR). RuvA specifically binds to HJ cruciform DNA, conferring on it an open structure. The RuvB hexamer acts as an ATP-dependent pump, pulling dsDNA into and through the RuvAB complex. RuvB forms 2 homohexamers on either side of HJ DNA bound by 1 or 2 RuvA tetramers; 4 subunits per hexamer contact DNA at a time. Coordinated motions by a converter formed by DNA-disengaged RuvB subunits stimulates ATP hydrolysis and nucleotide exchange. Immobilization of the converter enables RuvB to convert the ATP-contained energy into a lever motion, pulling 2 nucleotides of DNA out of the RuvA tetramer per ATP hydrolyzed, thus driving DNA branch migration. The RuvB motors rotate together with the DNA substrate, which together with the progressing nucleotide cycle form the mechanistic basis for DNA recombination by continuous HJ branch migration. Branch migration allows RuvC to scan DNA until it finds its consensus sequence, where it cleaves and resolves cruciform DNA. This chain is Holliday junction branch migration complex subunit RuvB, found in Pectobacterium carotovorum subsp. carotovorum (strain PC1).